The following is a 230-amino-acid chain: Vacuole-localized protein 4 (230 aa).

The first 19 residues, 1–19 (MRVSSAIFTIASGIAAVSA), serve as a signal peptide directing secretion.

Its subcellular location is the vacuole. Vacuolar protein required for aerial conidiation and conidial maturation. Also involved in blastospore production and cell cycle. Plays a vital role in the secretion of Pr1 proteases for cuticular penetration and hence contributes significantly to host infection and virulence. This Beauveria bassiana (strain ARSEF 2860) (White muscardine disease fungus) protein is Vacuole-localized protein 4.